The primary structure comprises 515 residues: Mucin-like protein Glc1.8a (515 aa).

Residues 1 to 20 (MSQITLIILILAIGFSCTKS) form the signal peptide. Topologically, residues 21–467 (HPINSTRDGE…ANDIKKPAFP (447 aa)) are extracellular. Asparagine 24, asparagine 45, asparagine 51, asparagine 60, asparagine 85, asparagine 93, asparagine 102, asparagine 123, asparagine 129, asparagine 138, asparagine 180, asparagine 201, asparagine 207, asparagine 216, asparagine 258, asparagine 279, asparagine 285, asparagine 319, asparagine 327, asparagine 336, asparagine 357, asparagine 363, asparagine 372, asparagine 397, asparagine 405, asparagine 413, asparagine 434, and asparagine 441 each carry an N-linked (GlcNAc...) asparagine; by host glycan. The segment at 80–114 (SKKDENITGQSEINTSAKSQPINSTRDGEDSGTDL) is disordered. Polar residues predominate over residues 86-104 (ITGQSEINTSAKSQPINST). The interval 314–358 (SKKDENVTGQSEINTSAKSQPINSTRDGEDSGTDLKNLLTDPANT) is disordered. Residues 320–338 (VTGQSEINTSAKSQPINST) are compositionally biased toward polar residues. The interval 393 to 413 (RKDENVTGQSEFNISTNSNLN) is disordered. The chain crosses the membrane as a helical span at residues 468 to 488 (YCIILITFQIVTVGMIIYLVF). The Cytoplasmic segment spans residues 489–515 (RTMRKPCQSERAIPLNTFGFGNNSSHE).

This sequence belongs to the polydnaviridae Glc1.8 protein family.

It localises to the host membrane. In terms of biological role, involved in suppression of the insect cellular immune response. Inhibits host hemocyte adhesion and phagocytosis. This chain is Mucin-like protein Glc1.8a (O9), found in Microplitis demolitor (Parasitoid wasp).